Here is a 1013-residue protein sequence, read N- to C-terminus: GPI ethanolamine phosphate transferase 3 (1013 aa).

A helical membrane pass occupies residues 41 to 61 (TLYIFLYSALAALQFIAIAFF). N-linked (GlcNAc...) asparagine glycosylation is found at asparagine 184, asparagine 205, asparagine 336, asparagine 399, and asparagine 423. 3 helical membrane-spanning segments follow: residues 447–467 (YYSIGTGIILLIISLAMLITI), 484–504 (VPTIIVMPLVSNVCFLGVFYV), and 515–535 (LWASLLATAVGIIIGFYVPIF). N-linked (GlcNAc...) asparagine glycosylation is present at asparagine 539. 4 consecutive transmembrane segments (helical) span residues 558 to 578 (VAAFLITLHALIFTSNSFTIW), 582 to 602 (IVSFSLTTLGMLTLYEFVFLP), 643 to 663 (IVGGYHSIVLIVCTRLASLIT), and 682 to 702 (NYSFSVMLGCLFLVFATPACI). Asparagine 707 carries an N-linked (GlcNAc...) asparagine glycan. The helical transmembrane segment at 715-735 (AAPIWIGMLMKSILFVNFIYW) threads the bilayer. N-linked (GlcNAc...) asparagine glycosylation is found at asparagine 742, asparagine 750, and asparagine 755. Helical transmembrane passes span 761-781 (IVVGVSLVAANIGWMMGPLCI), 802-822 (NAYGAQYFLLVINFFMCILLF), 825-845 (PLAQLSLFLMCNQLLSILEIF), 868-888 (FFSTGHQATIPAVQWDMGFIL), 899-919 (LGIVLNTFGPHILCGISVALL), 943-963 (GMLLIYQTVLCLSTFIWVTNF), and 977-997 (FMFAALSLIVTQLVLTFITIA).

Belongs to the PIGG/PIGN/PIGO family. PIGO subfamily.

The protein resides in the endoplasmic reticulum membrane. It functions in the pathway glycolipid biosynthesis; glycosylphosphatidylinositol-anchor biosynthesis. Functionally, involved in glycosylphosphatidylinositol-anchor biosynthesis. Transfers ethanolamine phosphate to the GPI third mannose which links the GPI-anchor to the C-terminus of the proteins by an amide bond. Involved in cell wall biosynthesis. This chain is GPI ethanolamine phosphate transferase 3 (GPI13), found in Eremothecium gossypii (strain ATCC 10895 / CBS 109.51 / FGSC 9923 / NRRL Y-1056) (Yeast).